The following is a 186-amino-acid chain: MTGPYFPQTIPFLPSYIPQDVDMTAVKAEVAALGVSAPPAATPGLLEVVQHARDEGIDLKIVLLDHNPPNDTPLRDIATVVGADYSDATVLVLSPNYVGSYSTQYPRVTLEAGEDHSKTGNPVQSAQNFVHELSTPEFPWSALTIVLLIGVLAAAVGARLMQLRGRRSATSTDAAPGAGDDLNQGV.

The chain crosses the membrane as a helical span at residues 138-158 (FPWSALTIVLLIGVLAAAVGA). Residues 166 to 186 (RRSATSTDAAPGAGDDLNQGV) form a disordered region.

Its subcellular location is the membrane. Functionally, may affect the expression of genes linked to host macrophage apoptosis and immune response, thereby promoting the survival of M.tuberculosis in host macrophages. Overexpression of the gene increases susceptibility of the bacteria to various stresses, but promotes intracellular survival in host macrophages. It has no impact on the growth rate in vitro. Overexpression causes changes in the transcriptome of THP-1 cells, including expression of genes involved in cell proliferation, fatty acid degradation, cytokine-cytokine receptor interaction and immune response pathways. In Mycobacterium tuberculosis (strain ATCC 25618 / H37Rv), this protein is Membrane protein Rv1476.